The following is a 105-amino-acid chain: MCTFVFESLCAMISTLKVNKIERGYWFIQCLRYCFIYIIKKQHRQADLPRNFGMRSKALYIGRSVGKWIETFCLDSNYSTHVYSLWAKSFLIIQFENVDPFVDHF.

It is found in the cytoplasm. Its subcellular location is the nucleus. This is an uncharacterized protein from Schizosaccharomyces pombe (strain 972 / ATCC 24843) (Fission yeast).